Reading from the N-terminus, the 104-residue chain is Putative pterin-4-alpha-carbinolamine dehydratase (104 aa).

It belongs to the pterin-4-alpha-carbinolamine dehydratase family.

It carries out the reaction (4aS,6R)-4a-hydroxy-L-erythro-5,6,7,8-tetrahydrobiopterin = (6R)-L-erythro-6,7-dihydrobiopterin + H2O. This Rhizobium meliloti (strain 1021) (Ensifer meliloti) protein is Putative pterin-4-alpha-carbinolamine dehydratase (pcbD).